Reading from the N-terminus, the 430-residue chain is Asparagine--tRNA ligase (430 aa).

The protein belongs to the class-II aminoacyl-tRNA synthetase family. As to quaternary structure, homodimer.

The protein resides in the cytoplasm. It carries out the reaction tRNA(Asn) + L-asparagine + ATP = L-asparaginyl-tRNA(Asn) + AMP + diphosphate + H(+). This Staphylococcus aureus (strain MRSA252) protein is Asparagine--tRNA ligase.